Here is a 98-residue protein sequence, read N- to C-terminus: Small ribosomal subunit protein eS24 (98 aa).

The protein belongs to the eukaryotic ribosomal protein eS24 family.

The sequence is that of Small ribosomal subunit protein eS24 from Thermococcus sibiricus (strain DSM 12597 / MM 739).